A 506-amino-acid polypeptide reads, in one-letter code: Aldehyde dehydrogenase [NAD(P)+] 1 (506 aa).

Glu-268 (proton acceptor) is an active-site residue. The active-site Nucleophile is the Cys-302.

The protein belongs to the aldehyde dehydrogenase family.

Its subcellular location is the cytoplasm. The catalysed reaction is an aldehyde + NAD(+) + H2O = a carboxylate + NADH + 2 H(+). It carries out the reaction 3-aminopropanal + NAD(+) + H2O = beta-alanine + NADH + 2 H(+). Its function is as follows. Cytoplasmic aldehyde dehydrogenase involved in ethanol oxidation. Required for pantothenic acid production through the conversion of 3-aminopropanal to beta-alanine, an intermediate in pantothenic acid (vitamin B5) and coenzyme A (CoA) biosynthesis. In Saccharomyces cerevisiae (strain ATCC 204508 / S288c) (Baker's yeast), this protein is Aldehyde dehydrogenase [NAD(P)+] 1 (ALD2).